Here is a 94-residue protein sequence, read N- to C-terminus: DNA-directed RNA polymerase subunit omega (94 aa).

This sequence belongs to the RNA polymerase subunit omega family. In terms of assembly, the RNAP catalytic core consists of 2 alpha, 1 beta, 1 beta' and 1 omega subunit. When a sigma factor is associated with the core the holoenzyme is formed, which can initiate transcription.

It catalyses the reaction RNA(n) + a ribonucleoside 5'-triphosphate = RNA(n+1) + diphosphate. Its function is as follows. Promotes RNA polymerase assembly. Latches the N- and C-terminal regions of the beta' subunit thereby facilitating its interaction with the beta and alpha subunits. In Frankia casuarinae (strain DSM 45818 / CECT 9043 / HFP020203 / CcI3), this protein is DNA-directed RNA polymerase subunit omega.